A 197-amino-acid chain; its full sequence is uncharacterized protein (197 aa).

The next 4 helical transmembrane spans lie at 30–50, 61–81, 101–121, and 130–150; these read WVAM…VEMA, LVAG…PPLV, LWSV…LGLA, and IGEF…VAML.

Its subcellular location is the cell membrane. This is an uncharacterized protein from Mycobacterium tuberculosis (strain CDC 1551 / Oshkosh).